A 1331-amino-acid polypeptide reads, in one-letter code: Retrotransposon-like protein 1 (1331 aa).

Disordered regions lie at residues 1 to 123, 128 to 147, 556 to 595, and 971 to 1033; these read MMEP…SQED, TDLA…SSTV, EADE…ETFY, and PSSE…DEPN. Residues 19-30 are compositionally biased toward low complexity; sequence SSKQMESSEGSS. Acidic residues-rich tracts occupy residues 109–123, 128–143, and 569–578; these read EMEE…SQED, TDLA…EEPD, and GSDDLSESEP. A compositionally biased stretch (low complexity) spans 992–1001; it reads RRVATTTRPT. Acidic residues predominate over residues 1015-1024; it reads PESEDEEESE. 2 consecutive transmembrane segments (helical) span residues 1070-1090 and 1117-1137; these read FYRS…LVML and LFLD…TQLF. Residues 1309–1331 are disordered; sequence SPPREGATLEELPSDADEDAGLD. Over residues 1320 to 1331 the composition is skewed to acidic residues; that stretch reads LPSDADEDAGLD.

The protein localises to the membrane. Its function is as follows. Plays an essential role in capillaries endothelial cells for the maintenance of feto-maternal interface and for development of the placenta. The protein is Retrotransposon-like protein 1 (RTL1) of Bos taurus (Bovine).